The chain runs to 553 residues: Cysteine desulfurase IscS (553 aa).

The segment covering Asn102–Asn122 has biased composition (low complexity). The segment at Asn102–Gly125 is disordered.

It belongs to the class-V pyridoxal-phosphate-dependent aminotransferase family. NifS/IscS subfamily. In terms of assembly, homotetramer. Interacts with Isd11; the interaction enhances cysteine desulfurase activity of IscS. Interacts with IscU. Component of a complex, at least composed of IscS, Isd11 and IscU. Pyridoxal 5'-phosphate serves as cofactor.

The protein localises to the mitochondrion. It catalyses the reaction (sulfur carrier)-H + L-cysteine = (sulfur carrier)-SH + L-alanine. It functions in the pathway cofactor biosynthesis; iron-sulfur cluster biosynthesis. In terms of biological role, catalyzes sulfur activation and mobilization in iron-sulfur cluster formation (ISC) pathway for iron-sulfur (Fe-S) cluster biogenesis. Active when in complex with a partner protein Isd11. This chain is Cysteine desulfurase IscS, found in Plasmodium falciparum (isolate 3D7).